Consider the following 1100-residue polypeptide: Exportin-T (1100 aa).

It belongs to the exportin family. Interacts with CEX1, GSP1, GSP2, NSP1, NUP2 and UTP8.

The protein localises to the nucleus. The protein resides in the cytoplasm. Functionally, tRNA nucleus export receptor which facilitates tRNA translocation across the nuclear pore complex. Preferentially interacts with tRNAs with mature 5'- and 3'-termini and does not distinguish between intron-containing and spliced tRNAs. In the nucleus binds to tRNA and to the Ran-GTPases GSP1 or GSP2 in their active GTP-bound form. Docking of this trimeric complex to the nuclear pore complex (NPC) is mediated through binding to nucleoporins. Upon transit of a nuclear export complex into the cytoplasm, disassembling of the complex and hydrolysis of Ran-GTP to Ran-GDP cause release of the tRNA from the export receptor. The directionality of nuclear export is thought to be conferred by an asymmetric distribution of the GTP- and GDP-bound forms of Ran between the cytoplasm and nucleus. This is Exportin-T (LOS1) from Saccharomyces cerevisiae (strain ATCC 204508 / S288c) (Baker's yeast).